Reading from the N-terminus, the 341-residue chain is Putative UPF0607 protein ENSP00000383144 (341 aa).

Disordered regions lie at residues 70–131 (RLPK…NPRP) and 218–279 (LMVG…PPAK). Basic and acidic residues predominate over residues 72 to 101 (PKTEVRAEEPKEATEVKDQVETQEQEDNKR). Positions 108–127 (EAASTSRPLETQGNLTSSWY) are enriched in polar residues. The span at 243–252 (AGHRSHKRKL) shows a compositional bias: basic residues.

The protein belongs to the UPF0607 family.

This Homo sapiens (Human) protein is Putative UPF0607 protein ENSP00000383144.